A 1046-amino-acid polypeptide reads, in one-letter code: MEPDTATEAATVAVSDARATVVVVEDEQPGPSTFKEEGAAAAATEGTTATEKGEKKEKITSPFQLKLAAKASKSEKEMDPEYEEKMVNMPLKADRAKRFEFLLKQTELFAHFIQPSAQKSPTSPLNMKLARPRVKKDDKQSLISVGDYRHRRTEQEEDEELLSESRKTSNVCVRFEVSPSYVKGGPLRDYQIRGLNWLISLYENGVNGILADEMGLGKTLQTIALLGYLKHYRNIPGPHMVLVPKSTLHNWMNEFKRWVPSLRVICFVGDKDVRAAFIRDEMMPGEWDVCVTSYEMVIKEKSVFKKFHWRYLVIDEAHRIKNEKSKLSEIVREFKSTNRLLLTGTPLQNNLHELWALLNFLLPDVFNSADDFDSWFDTKNCLGDQKLVERLHAVLKPFLLRRIKTDVEKSLPPKKEIKIYLGLSKMQREWYTKILMKDIDVLNSSGKMDKMRLLNILMQLRKCCNHPYLFDGAEPGPPYTTDEHIVGNSGKMVALDKLLARIKEQGSRVLIFSQMTRLLDILEDYCMWRGYEYSRLDGQTPHEEREEAIDAFNAPNSSKFIFMLSTRAGGLGINLASADVVILYDSDWNPQVDLQAMDRAHRIGQKKPVRVFRLITDNTVEERIVERAEIKLRLDSIVIQQGRLIDQQSNKLAKEEMLQMIRHGATHVFACKESELTDEDIVTILERGEKKTAEMNERMQKMGESSLRNFRMDLEQSLYKFEGEDYREKQKLGTVEWIEPPKRERKANYAVDAYFREALRVSEPKIPKAPRPPKQPNVQDFQFFPPRLFELLEKEILYYRKTIGYKVPRNPEIPNPAIAQREEQKKIDGAEPLTPQETEEKDKLLTQGFTNWTKRDFNQFIKANEKYGRDDIDNIAREVEGKSPEEVMEYSAVFWERCNELQDIEKIMAQIERGEARIQRRISIKKALDAKIARYKAPFHQLRIQYGTSKGKNYTEEEDRFLICMLHKMGFDRENVYEELRQCVRNAPQFRFDWFIKSRTAMEFQRRCNTLISLIEKENMEIEERERAEKKKRATKTPMVKFSAFS.

Residues 27-61 (EQPGPSTFKEEGAAAAATEGTTATEKGEKKEKITS) form a disordered region. Positions 39–50 (AAAAATEGTTAT) are enriched in low complexity. 2 positions are modified to phosphoserine: Ser120 and Ser123. Residues 199–364 (ISLYENGVNG…WALLNFLLPD (166 aa)) form the Helicase ATP-binding domain. 212 to 219 (DEMGLGKT) provides a ligand contact to ATP. Residues 315–318 (DEAH) carry the DEAH box motif. In terms of domain architecture, Helicase C-terminal spans 494 to 645 (ALDKLLARIK…SIVIQQGRLI (152 aa)). Residues Lys654, Lys720, and Lys742 each participate in a glycyl lysine isopeptide (Lys-Gly) (interchain with G-Cter in SUMO2) cross-link. Positions 819–840 (AQREEQKKIDGAEPLTPQETEE) are disordered. Residues 820–829 (QREEQKKIDG) are compositionally biased toward basic and acidic residues. Residues 847 to 899 (QGFTNWTKRDFNQFIKANEKYGRDDIDNIAREVEGKSPEEVMEYSAVFWERCN) form the SANT 1 domain. Tyr946 carries the phosphotyrosine modification. Positions 950–1014 (KGKNYTEEED…QRRCNTLISL (65 aa)) constitute an SANT 2 domain. Residues 1003 to 1037 (EFQRRCNTLISLIEKENMEIEERERAEKKKRATKT) are a coiled coil. The disordered stretch occupies residues 1025-1046 (RERAEKKKRATKTPMVKFSAFS).

Belongs to the SNF2/RAD54 helicase family. ISWI subfamily. May form homodimers. Component of the ACF-1 ISWI chromatin remodeling complex at least composed of SMARCA1 and BAZ1A, which regulates the spacing of histone octamers on the DNA template to facilitate access to DNA. Within the complex interacts with BAZ1A; the interaction is direct. Component of the WICH-1 ISWI chromatin remodeling complex at least composed of SMARCA1 and BAZ1B/WSTF. Within the complex interacts with BAZ1B/WSTF. Component of the NoRC-1 ISWI chromatin remodeling complex at least composed of SMARCA1 and BAZ2A/TIP5. Within the complex interacts with BAZ2A/TIP5. Component of the BRF-1 ISWI chromatin remodeling complex at least composed of SMARCA1 and BAZ2B. Within the complex interacts with BAZ2B. Component of the NURF-1 ISWI chromatin remodeling complex (also called the nucleosome-remodeling factor (NURF) complex) at least composed of SMARCA1, BPTF, RBBP4 and RBBP7. Within the complex interacts with BPTF. Within the complex interacts with RBBP4 and RBBP7. Component of the CERF-1 ISWI chromatin remodeling complex (also called the CECR2-containing-remodeling factor (CERF) complex) at least composed of CECR2 and SMARCA1. LUZP1 is detected as part of the CERF-1 complex in embryonic stem cells where it is involved in complex stabilization but is not detected in the complex in the testis. Component of the RSF-1 ISWI chromatin remodeling complex at least composed of SMARCA1 and RSF1. Within the complex interacts with RSF1. Interacts with PRLR. Interacts with ERCC6. As to expression, predominantly expressed in cortex, cerebellum, ovaries, testes, uterus and placenta.

It localises to the nucleus. It catalyses the reaction ATP + H2O = ADP + phosphate + H(+). Functionally, ATPase that possesses intrinsic ATP-dependent chromatin-remodeling activity. ATPase activity is substrate-dependent, and is increased when nucleosomes are the substrate, but is also catalytically active when DNA alone is the substrate. Catalytic subunit of ISWI chromatin-remodeling complexes, which form ordered nucleosome arrays on chromatin and facilitate access to DNA during DNA-templated processes such as DNA replication, transcription, and repair. Within the ISWI chromatin-remodeling complexes, slides edge- and center-positioned histone octamers away from their original location on the DNA template. Catalytic activity and histone octamer sliding propensity is regulated and determined by components of the ISWI chromatin-remodeling complexes. The BAZ1A-, BAZ1B-, BAZ2A- and BAZ2B-containing ISWI chromatin-remodeling complexes regulate the spacing of nucleosomes along the chromatin and have the ability to slide mononucleosomes to the center of a DNA template. The CECR2- and RSF1-containing ISWI chromatin-remodeling complexes do not have the ability to slide mononucleosomes to the center of a DNA template. Within the NURF-1 and CERF-1 ISWI chromatin remodeling complexes, nucleosomes are the preferred substrate for its ATPase activity. Within the NURF-1 ISWI chromatin-remodeling complex, binds to the promoters of En1 and En2 to positively regulate their expression and promote brain development. May promote neurite outgrowth. May be involved in the development of luteal cells. Facilitates nucleosome assembly during DNA replication, ensuring replication fork progression and genomic stability by preventing replication stress and nascent DNA gaps. This Mus musculus (Mouse) protein is SWI/SNF-related matrix-associated actin-dependent regulator of chromatin subfamily A member 1 (Smarca1).